The following is a 177-amino-acid chain: Large ribosomal subunit protein uL6 (177 aa).

This sequence belongs to the universal ribosomal protein uL6 family. Part of the 50S ribosomal subunit.

In terms of biological role, this protein binds to the 23S rRNA, and is important in its secondary structure. It is located near the subunit interface in the base of the L7/L12 stalk, and near the tRNA binding site of the peptidyltransferase center. The polypeptide is Large ribosomal subunit protein uL6 (Bartonella henselae (strain ATCC 49882 / DSM 28221 / CCUG 30454 / Houston 1) (Rochalimaea henselae)).